The primary structure comprises 622 residues: Probable potassium transport system protein Kup 1 (622 aa).

A run of 12 helical transmembrane segments spans residues 7 to 27 (LLVL…TSPL), 50 to 70 (LISL…VLFL), 96 to 116 (TAIL…DAMI), 132 to 152 (VTPA…LLLF), 165 to 185 (FFGP…FVHI), 210 to 230 (VGIV…ALYA), 244 to 264 (WFTV…AFVL), 282 to 302 (ALLP…QAVI), 334 to 354 (IYLP…VFLF), 360 to 380 (LATA…VLSF), 391 to 411 (TWWA…FLGA), and 416 to 436 (IHDG…IMWT).

It belongs to the HAK/KUP transporter (TC 2.A.72) family.

It is found in the cell inner membrane. It catalyses the reaction K(+)(in) + H(+)(in) = K(+)(out) + H(+)(out). Transport of potassium into the cell. Likely operates as a K(+):H(+) symporter. The chain is Probable potassium transport system protein Kup 1 from Rhizobium meliloti (strain 1021) (Ensifer meliloti).